Here is a 451-residue protein sequence, read N- to C-terminus: Phosphoglucosamine mutase (451 aa).

Serine 103 functions as the Phosphoserine intermediate in the catalytic mechanism. Mg(2+)-binding residues include serine 103, aspartate 243, aspartate 245, and aspartate 247. Serine 103 carries the phosphoserine modification.

Belongs to the phosphohexose mutase family. Mg(2+) serves as cofactor. Activated by phosphorylation.

It carries out the reaction alpha-D-glucosamine 1-phosphate = D-glucosamine 6-phosphate. In terms of biological role, catalyzes the conversion of glucosamine-6-phosphate to glucosamine-1-phosphate. The polypeptide is Phosphoglucosamine mutase (Lactobacillus johnsonii (strain CNCM I-12250 / La1 / NCC 533)).